Consider the following 83-residue polypeptide: MSGNTGERPFADIITSIRYWVIHSITIPSLFIAGWLFVSTGLAYDVFGSPRPNEYFSESRQEVPLITGRFDSLEQVDAFTKSF.

A helical transmembrane segment spans residues 21–35 (VIHSITIPSLFIAGW). His-23 contributes to the heme binding site.

It belongs to the PsbE/PsbF family. In terms of assembly, heterodimer of an alpha subunit and a beta subunit. PSII is composed of 1 copy each of membrane proteins PsbA, PsbB, PsbC, PsbD, PsbE, PsbF, PsbH, PsbI, PsbJ, PsbK, PsbL, PsbM, PsbT, PsbX, PsbY, PsbZ, Psb30/Ycf12, at least 3 peripheral proteins of the oxygen-evolving complex and a large number of cofactors. It forms dimeric complexes. Heme b serves as cofactor.

The protein resides in the plastid. It localises to the chloroplast thylakoid membrane. Functionally, this b-type cytochrome is tightly associated with the reaction center of photosystem II (PSII). PSII is a light-driven water:plastoquinone oxidoreductase that uses light energy to abstract electrons from H(2)O, generating O(2) and a proton gradient subsequently used for ATP formation. It consists of a core antenna complex that captures photons, and an electron transfer chain that converts photonic excitation into a charge separation. This is Cytochrome b559 subunit alpha from Adiantum capillus-veneris (Maidenhair fern).